The following is a 487-amino-acid chain: Argininosuccinate lyase (487 aa).

The protein belongs to the lyase 1 family. Argininosuccinate lyase subfamily.

It is found in the cytoplasm. It carries out the reaction 2-(N(omega)-L-arginino)succinate = fumarate + L-arginine. The protein operates within amino-acid biosynthesis; L-arginine biosynthesis; L-arginine from L-ornithine and carbamoyl phosphate: step 3/3. The polypeptide is Argininosuccinate lyase (Methanothrix thermoacetophila (strain DSM 6194 / JCM 14653 / NBRC 101360 / PT) (Methanosaeta thermophila)).